The chain runs to 113 residues: Large ribosomal subunit protein uL22 (113 aa).

This sequence belongs to the universal ribosomal protein uL22 family. Part of the 50S ribosomal subunit.

This protein binds specifically to 23S rRNA; its binding is stimulated by other ribosomal proteins, e.g. L4, L17, and L20. It is important during the early stages of 50S assembly. It makes multiple contacts with different domains of the 23S rRNA in the assembled 50S subunit and ribosome. Functionally, the globular domain of the protein is located near the polypeptide exit tunnel on the outside of the subunit, while an extended beta-hairpin is found that lines the wall of the exit tunnel in the center of the 70S ribosome. The sequence is that of Large ribosomal subunit protein uL22 from Desulforamulus reducens (strain ATCC BAA-1160 / DSM 100696 / MI-1) (Desulfotomaculum reducens).